A 170-amino-acid chain; its full sequence is Cathelicidin antimicrobial peptide (170 aa).

The first 30 residues, 1–30 (MKTQRDGHSLGRWSLVLLLLGLVMPLAIIA), serve as a signal peptide directing secretion. The propeptide at 31 to 131 (QVLSYKEAVL…DISCDKDNKR (101 aa)) is cathelin-like domain (CLD). 2 disulfides stabilise this stretch: C86-C97 and C108-C125. The tract at residues 150–162 (FKRIVQRIKDFLR) is active core.

This sequence belongs to the cathelicidin family. Monomer, homodimer or homotrimer (in vitro). Oligomerizes as tetra- or hexamer in solution (in vitro). The N-terminus is blocked. Post-translationally, proteolytically cleaved by proteinase PRTN3 into antibacterial peptide LL-37. Proteolytically cleaved by cathepsin CTSG and neutrophil elastase ELANE. In terms of processing, resistant to proteolytic degradation in solution, and when bound to both zwitterionic (mimicking mammalian membranes) and negatively charged membranes (mimicking bacterial membranes). After secretion onto the skin surface, the CAMP gene product is processed by a serine protease-dependent mechanism into multiple novel antimicrobial peptides distinct from and shorter than cathelicidin LL-37, such as peptides KR-20 (residues 151-170), LL-23 (residues 134-156), LL-29 (residues 134-162), KS-30 (residues 141-170), RK-31 (residues 140-170) and FF-33 (residues 138-170). The peptides act synergistically, killing bacteria at lower concentrations when present together, and maintain activity at increased salt condition. In terms of tissue distribution, expressed in neutrophilic granulocytes (at protein level). Expressed in bone marrow. Expressed in granulocytes (at protein level). Expressed by the eccrine apparatus and secreted into sweat on skin (at protein level). As to expression, expressed in bone marrow and testis.

Its subcellular location is the secreted. The protein resides in the vesicle. Functionally, antimicrobial protein that is an integral component of the innate immune system. Binds to bacterial lipopolysaccharides (LPS). Acts via neutrophil N-formyl peptide receptors to enhance the release of CXCL2. Postsecretory processing generates multiple cathelicidin antimicrobial peptides with various lengths which act as a topical antimicrobial defense in sweat on skin. The unprocessed precursor form, cathelicidin antimicrobial peptide, inhibits the growth of Gram-negative E.coli and E.aerogenes with efficiencies comparable to that of the mature peptide LL-37 (in vitro). Its function is as follows. Antimicrobial peptide that is an integral component of the innate immune system. Binds to bacterial lipopolysaccharides (LPS). Causes membrane permeabilization by forming transmembrane pores (in vitro). Causes lysis of E.coli. Exhibits antimicrobial activity against Gram-negative bacteria such as P.aeruginosa, S.typhimurium, E.aerogenes, E.coli and P.syringae, Gram-positive bacteria such as L.monocytogenes, S.epidermidis, S.pyogenes and S.aureus, as well as vancomycin-resistant enterococci (in vitro). Exhibits antimicrobial activity against methicillin-resistant S.aureus, P.mirabilis, and C.albicans in low-salt media, but not in media containing 100 mM NaCl (in vitro). Forms chiral supramolecular assemblies with quinolone signal (PQS) molecules of P.aeruginosa, which may lead to interference of bacterial quorum signaling and perturbance of bacterial biofilm formation. May form supramolecular fiber-like assemblies on bacterial membranes. Induces cytokine and chemokine production as well as TNF/TNFA and CSF2/GMCSF production in normal human keratinocytes. Exhibits hemolytic activity against red blood cells. Exhibits antimicrobial activity against E.coli and B.megaterium (in vitro). In terms of biological role, acts synergistically with peptides KS-30 and KR-31, killing bacteria such as S.aureus, E.coli and C.albicans at lower concentrations when present together, and maintains activity at increased salt condition. Does not have the ability to stimulate CXCL8/IL8 release from keratinocytes. Functionally, poorly active (MIC &gt; 150 uM) against E.coli strain K12. Is able to induce the pro-inflammatory cytokine TNF/TNFA or the chemokine CCL2/MCP1. Its function is as follows. Moderately antibacterial. Moderately antibacterial. Acts synergistically with peptides KR-20 and KR-31, killing bacteria such as S.aureus, E.coli and C.albicans at lower concentrations when present together, and maintain activity at increased salt condition. Does not have the ability to stimulate CXCL8/IL8 release from keratinocytes. In terms of biological role, acts synergistically with peptides KS-30 and KR-31, killing bacteria such as S.aureus, E.coli and C.albicans at lower concentrations when present together, and maintain activity at increased salt condition. Does not have the ability to stimulate CXCL8/IL8 release from keratinocytes. Functionally, inhibits the growth of E.coli and B.megaterium and exhibits hemolytic activity against human red blood cells. This Homo sapiens (Human) protein is Cathelicidin antimicrobial peptide.